The sequence spans 585 residues: Chaperonin GroEL, chloroplastic (585 aa).

Residues 55–58 (TLGP), 113–117 (DGTTT), Gly-442, 507–509 (NAA), and Asp-523 contribute to the ATP site.

The protein belongs to the chaperonin (HSP60) family. As to quaternary structure, forms a cylinder of 14 subunits composed of two heptameric rings stacked back-to-back. Interacts with the co-chaperonin GroES.

Its subcellular location is the plastid. The protein resides in the chloroplast. It carries out the reaction ATP + H2O + a folded polypeptide = ADP + phosphate + an unfolded polypeptide.. Its function is as follows. Together with its co-chaperonin GroES, plays an essential role in assisting protein folding. The GroEL-GroES system forms a nano-cage that allows encapsulation of the non-native substrate proteins and provides a physical environment optimized to promote and accelerate protein folding. In Pyrenomonas salina, this protein is Chaperonin GroEL, chloroplastic.